The following is a 279-amino-acid chain: Inorganic pyrophosphatase (279 aa).

Residue Arg-100 participates in diphosphate binding. Asp-132, Asp-137, and Asp-169 together coordinate Mg(2+).

Belongs to the PPase family. Requires Mg(2+) as cofactor.

The catalysed reaction is diphosphate + H2O = 2 phosphate + H(+). In Dictyostelium discoideum (Social amoeba), this protein is Inorganic pyrophosphatase (ppa1).